The sequence spans 313 residues: Pre-mRNA-splicing factor 38A (313 aa).

The interval 1–179 (MANRTVKDAN…VLEEAELLDP (179 aa)) is N-terminal protein interaction domain. Residues 172-201 (EEAELLDPRISALEEDLDEVETSEEEDDED) adopt a coiled-coil conformation. Positions 182–313 (SALEEDLDEV…SHKRSRRGNE (132 aa)) are disordered. Positions 184-202 (LEEDLDEVETSEEEDDEDE) are enriched in acidic residues. A compositionally biased stretch (basic and acidic residues) spans 203-224 (KPERMQSPEPHRRSYRDMDRPR). Composition is skewed to basic residues over residues 225–250 (RSPS…RSPS), 260–294 (HRSK…RSHS), and 302–313 (KKSHKRSRRGNE).

The protein belongs to the PRP38 family. In terms of assembly, component of the spliceosome B complex.

Its subcellular location is the nucleus. In terms of biological role, involved in pre-mRNA splicing as a component of the spliceosome. The polypeptide is Pre-mRNA-splicing factor 38A (prpf38a) (Danio rerio (Zebrafish)).